Consider the following 299-residue polypeptide: Ribosomal RNA small subunit methyltransferase H (299 aa).

S-adenosyl-L-methionine is bound by residues 36-38 (GGH), D55, Y82, D103, and Q110. Composition is skewed to basic and acidic residues over residues 269–282 (PVRPSEEEIRENPR) and 289–299 (RAAERIEEGGD). The disordered stretch occupies residues 269–299 (PVRPSEEEIRENPRARSGRLRAAERIEEGGD).

It belongs to the methyltransferase superfamily. RsmH family.

Its subcellular location is the cytoplasm. It catalyses the reaction cytidine(1402) in 16S rRNA + S-adenosyl-L-methionine = N(4)-methylcytidine(1402) in 16S rRNA + S-adenosyl-L-homocysteine + H(+). Its function is as follows. Specifically methylates the N4 position of cytidine in position 1402 (C1402) of 16S rRNA. This chain is Ribosomal RNA small subunit methyltransferase H, found in Thermotoga maritima (strain ATCC 43589 / DSM 3109 / JCM 10099 / NBRC 100826 / MSB8).